The chain runs to 617 residues: Proline--tRNA ligase (617 aa).

The protein belongs to the class-II aminoacyl-tRNA synthetase family. ProS type 1 subfamily. Homodimer.

The protein localises to the cytoplasm. The catalysed reaction is tRNA(Pro) + L-proline + ATP = L-prolyl-tRNA(Pro) + AMP + diphosphate. Catalyzes the attachment of proline to tRNA(Pro) in a two-step reaction: proline is first activated by ATP to form Pro-AMP and then transferred to the acceptor end of tRNA(Pro). As ProRS can inadvertently accommodate and process non-cognate amino acids such as alanine and cysteine, to avoid such errors it has two additional distinct editing activities against alanine. One activity is designated as 'pretransfer' editing and involves the tRNA(Pro)-independent hydrolysis of activated Ala-AMP. The other activity is designated 'posttransfer' editing and involves deacylation of mischarged Ala-tRNA(Pro). The misacylated Cys-tRNA(Pro) is not edited by ProRS. This chain is Proline--tRNA ligase, found in Streptococcus pneumoniae (strain ATCC 700669 / Spain 23F-1).